We begin with the raw amino-acid sequence, 118 residues long: Non-specific lipid-transfer protein 1 (118 aa).

Positions 1–25 (MAGVMKLACLLLACMIVAGPITSNA) are cleaved as a signal peptide. Disulfide bonds link Cys-29–Cys-76, Cys-39–Cys-53, Cys-54–Cys-100, and Cys-74–Cys-114.

Belongs to the plant LTP family. As to expression, expressed primarily in epidermal cells.

It is found in the secreted. The protein localises to the cell wall. In terms of biological role, plant non-specific lipid-transfer proteins transfer phospholipids as well as galactolipids across membranes. May play a role in wax or cutin deposition in the cell walls of expanding epidermal cells and certain secretory tissues. This chain is Non-specific lipid-transfer protein 1 (LTP1), found in Arabidopsis thaliana (Mouse-ear cress).